The chain runs to 470 residues: MTPFMTEDFLLDTEFARRLYHDYAKDQPIFDYHCHLPPQQIAENYRFKNLYDIWLKGDHYKWRAMRTNGVPERLCTGDASDREKFDAWAATVPHTIGNPLYHWTHLELRRPFGITGKLLSPKTADEIWNQCNDLLAQDAFSARGIMQQMNVKMVGTTDDPIDSLEHHATIAKDSAFTVKVLPSWRPDKAFNIEQATFADYMAKLAEVSDTDIRRFSDLQTALTKRLDHFAAHGCKVSDHALDVVLFAEASESELNAILSRRLAGETLSGHEIAQFKTAVLVWLGAEYARRGWVQQYHIGALRNNNQRQFRLLGPDVGFDSINDRPLAEELSKLLSKQNEENLLPKTILYCLNPRDNEVLGTMIGNFQGEGMPGKMQFGSGWWFNDQKDGMERQMTQLAQLGLLSRFVGMLTDSRSFLSYTRHEYFRRILCQMIGRWVEAGEAPADIDLLGEMVKNICFNNARDYFAIELH.

Belongs to the metallo-dependent hydrolases superfamily. Uronate isomerase family.

It catalyses the reaction D-glucuronate = D-fructuronate. The enzyme catalyses aldehydo-D-galacturonate = keto-D-tagaturonate. The protein operates within carbohydrate metabolism; pentose and glucuronate interconversion. The sequence is that of Uronate isomerase from Cronobacter sakazakii (strain ATCC BAA-894) (Enterobacter sakazakii).